The chain runs to 191 residues: Large ribosomal subunit protein uL6 (191 aa).

The protein belongs to the universal ribosomal protein uL6 family. Component of the large ribosomal subunit. Mature ribosomes consist of a small (40S) and a large (60S) subunit. The 40S subunit contains about 32 different proteins and 1 molecule of RNA (18S). The 60S subunit contains 45 different proteins and 3 molecules of RNA (25S, 5.8S and 5S).

The protein resides in the cytoplasm. Functionally, component of the ribosome, a large ribonucleoprotein complex responsible for the synthesis of proteins in the cell. The small ribosomal subunit (SSU) binds messenger RNAs (mRNAs) and translates the encoded message by selecting cognate aminoacyl-transfer RNA (tRNA) molecules. The large subunit (LSU) contains the ribosomal catalytic site termed the peptidyl transferase center (PTC), which catalyzes the formation of peptide bonds, thereby polymerizing the amino acids delivered by tRNAs into a polypeptide chain. The nascent polypeptides leave the ribosome through a tunnel in the LSU and interact with protein factors that function in enzymatic processing, targeting, and the membrane insertion of nascent chains at the exit of the ribosomal tunnel. This chain is Large ribosomal subunit protein uL6, found in Candida albicans (strain SC5314 / ATCC MYA-2876) (Yeast).